Here is a 508-residue protein sequence, read N- to C-terminus: Mu-like prophage FluMu protein gp28 (508 aa).

To phage Mu protein gp28.

This chain is Mu-like prophage FluMu protein gp28, found in Haemophilus influenzae (strain ATCC 51907 / DSM 11121 / KW20 / Rd).